The primary structure comprises 643 residues: E3 ubiquitin-protein ligase AMFR (643 aa).

The disordered stretch occupies residues 39–67 (PEAGPGEPDQLTASLQPEPPAPARPSAGG). 6 helical membrane passes run 82–102 (LFVW…AKLI), 122–142 (FWNF…VQTV), 145–165 (VVMW…VQLC), 186–206 (VLSL…VCSI), 215–235 (TLAF…HVIL), and 276–296 (HIHM…VIFM). The RING-type zinc-finger motif lies at 341–379 (CAICWDSMQAARKLPCGHLFHNSCLRSWLEQDTSCPTCR). Residues 429–449 (IASWLPSFSVEVMHTTNILGI) form a helical membrane-spanning segment. Residues 456 to 498 (QLNAMAHQIQEMFPQVPYHLVLQDLQLTRSVEITTDNILEGRI) enclose the CUE domain. Disordered stretches follow at residues 504 to 579 (TQRS…DERQ) and 596 to 624 (RFLN…PVTL). Phosphoserine occurs at positions 516, 523, and 542. Acidic residues predominate over residues 548 to 563 (TLDFGEVEVEPSEVED). A compositionally biased stretch (basic and acidic residues) spans 564–579 (FEARGSRFSKSADERQ). The interval 622-640 (VTLRRRMLAAAAERRLQKQ) is VCP/p97-interacting motif (VIM).

Interacts with RNF5. Also forms an ERAD complex containing VCP/p97, NGLY1; PSMC1; SAKS1 and RAD23B required for coupling retrotranslocation, ubiquitination and deglycosylation. Interacts with DERL1. Interacts (through a region distinct from the RING finger) with UBE2G2/UBC7. Component of the VCP/p97-AMFR/gp78 complex that enhances VCP/p97 binding to polyubiquitinated proteins for their degradation by the endoplasmic reticulum-associated degradation (ERAD) pathway. Interacts (via the VIM) with VCP/p97. Interacts (via its membrane domain) with INSIG1; the interaction initiates the sterol-mediated ubiquitination and degradation of HMGCR by the ERAD pathway. Interacts with AUP1, UBE2G2 and RNF139/TRC8; interaction with AUP1 facilitates interaction of AMFR with ubiquitin-conjugating enzyme UBE2G2 and ubiquitin ligase RNF139, leading to sterol-induced ubiquitination of HMGCR and its subsequent proteasomal degradation. Interacts with BAG6. Interacts with USP13 (via UBA 2 domain); the interaction is direct. Interacts with LMBR1L. Interacts with UBAC2 and CTNNB1. Interacts with C18orf32. In terms of assembly, (Microbial infection) Interacts with Staphylococcus aureus HIgB; this interaction regulates AMFR-mediated inflammation by promoting TAB3 ubiquitination to promote TAB3-TAK1 complex formation. In terms of processing, palmitoylation of the RING-type zing finger by ZDHHC6 promotes localization to the peripheral endoplasmic reticulum. Widely expressed.

It localises to the endoplasmic reticulum membrane. The catalysed reaction is [E2 ubiquitin-conjugating enzyme]-S-ubiquitinyl-L-cysteine + [acceptor protein]-L-cysteine = [E2 ubiquitin-conjugating enzyme]-L-cysteine + [acceptor protein]-S-ubiquitinyl-L-cysteine.. Its pathway is protein modification; protein ubiquitination. E3 ubiquitin-protein ligase that mediates the polyubiquitination of lysine and cysteine residues on target proteins, such as CD3D, CYP3A4, CFTR, INSIG1, SOAT2/ACAT2 and APOB for proteasomal degradation. Component of a VCP/p97-AMFR/gp78 complex that participates in the final step of endoplasmic reticulum-associated degradation (ERAD). The VCP/p97-AMFR/gp78 complex is involved in the sterol-accelerated ERAD degradation of HMGCR through binding to the HMGCR-INSIG1 complex at the ER membrane. In addition, interaction of AMFR with AUP1 facilitates interaction of AMFR with ubiquitin-conjugating enzyme UBE2G2 and ubiquitin ligase RNF139, leading to sterol-induced HMGCR ubiquitination. The ubiquitinated HMGCR is then released from the ER into the cytosol for subsequent destruction. In addition to ubiquitination on lysine residues, catalyzes ubiquitination on cysteine residues: together with INSIG1, mediates polyubiquitination of SOAT2/ACAT2 at 'Cys-277', leading to its degradation when the lipid levels are low. Catalyzes ubiquitination and subsequent degradation of INSIG1 when cells are depleted of sterols. Mediates polyubiquitination of INSIG2 at 'Cys-215' in some tissues, leading to its degradation. Also regulates ERAD through the ubiquitination of UBL4A a component of the BAG6/BAT3 complex. Also acts as a scaffold protein to assemble a complex that couples ubiquitination, retranslocation and deglycosylation. Mediates tumor invasion and metastasis as a receptor for the GPI/autocrine motility factor. In association with LMBR1L and UBAC2, negatively regulates the canonical Wnt signaling pathway in the lymphocytes by promoting the ubiquitin-mediated degradation of CTNNB1 and Wnt receptors FZD6 and LRP6. Regulates NF-kappa-B and MAPK signaling pathways by mediating 'Lys-27'-linked polyubiquitination of TAB3 and promoting subsequent TAK1/MAP3K7 activation. Required for proper lipid homeostasis. The polypeptide is E3 ubiquitin-protein ligase AMFR (Homo sapiens (Human)).